The primary structure comprises 42 residues: uncharacterized protein (42 aa).

The chain crosses the membrane as a helical span at residues 5–27 (FLHTNITIIPHSVLYVSLSYYII).

It localises to the membrane. This is an uncharacterized protein from Saccharomyces cerevisiae (strain ATCC 204508 / S288c) (Baker's yeast).